The chain runs to 339 residues: Dehydrogenase/reductase SDR family member 7 (339 aa).

An N-terminal signal peptide occupies residues 1–28; the sequence is MNWELLLWLLVLCALLLLLVQLLRFLRA. Residues Ser60 and Ile62 each contribute to the NAD(+) site. Ser190 provides a ligand contact to substrate. Positions 203, 207, and 239 each coordinate NAD(+). Residue Tyr203 is the Proton acceptor of the active site.

Belongs to the short-chain dehydrogenases/reductases (SDR) family. Found predominantly in the adrenal glands, liver, thyroid, prostate, small intestine, colon, stomach, kidney and brain. Lower levels observed in skeletal muscle, the lung and the spleen.

It is found in the endoplasmic reticulum membrane. It catalyses the reaction all-trans-retinol + NADP(+) = all-trans-retinal + NADPH + H(+). It carries out the reaction 5alpha-androstane-3alpha,17beta-diol + NADP(+) = 17beta-hydroxy-5alpha-androstan-3-one + NADPH + H(+). Its function is as follows. NADPH-dependent oxidoreductase which catalyzes the reduction of a variety of compounds bearing carbonyl groups including steroids, retinoids and xenobiotics. Catalyzes the reduction/inactivation of 5alpha-dihydrotestosterone to 3alpha-androstanediol, with a possible role in the modulation of androgen receptor function. Involved in the reduction of all-trans-retinal to all-trans-retinol. Converts cortisone to 20beta-dihydrocortisone in vitro, although the physiological relevance of this activity is questionable. Reduces exogenous compounds such as quinones (1,2-naphtoquinone, 9,10-phenantrenequinone and benzoquinone) and other xenobiotics (alpha-diketones) in vitro, suggesting a role in the biotransformation of xenobiotics with carbonyl group. A dehydrogenase activity has not been detected so far. May play a role as tumor suppressor. This is Dehydrogenase/reductase SDR family member 7 from Homo sapiens (Human).